The sequence spans 234 residues: uncharacterized protein (234 aa).

Residues 199-234 are disordered; it reads DNQNEPLENYSDDNNFSNFDETEHVDDSEMNDDNFI.

This is an uncharacterized protein from Buchnera aphidicola subsp. Schizaphis graminum (strain Sg).